The sequence spans 179 residues: UPF0302 protein BLi02393/BL02764 (179 aa).

The protein belongs to the UPF0302 family.

This chain is UPF0302 protein BLi02393/BL02764, found in Bacillus licheniformis (strain ATCC 14580 / DSM 13 / JCM 2505 / CCUG 7422 / NBRC 12200 / NCIMB 9375 / NCTC 10341 / NRRL NRS-1264 / Gibson 46).